Reading from the N-terminus, the 977-residue chain is Serine/threonine-protein kinase/endoribonuclease IRE1 (977 aa).

Residues 1–18 (MPARRLLLLLTLLLPGLG) form the signal peptide. The Lumenal segment spans residues 19–443 (IFGSTSTVTL…EAPVDSMLKD (425 aa)). The N-linked (GlcNAc...) asparagine glycan is linked to Asn-176. Polar residues predominate over residues 410–419 (TSENAPTTVS). The disordered stretch occupies residues 410–434 (TSENAPTTVSRDVEEKPAHAPARPE). A helical membrane pass occupies residues 444 to 464 (MATIILSTFLLIGWVAFIITY). Topologically, residues 465–977 (PLSMHQQQQL…PQPPVTPDAL (513 aa)) are cytoplasmic. Positions 491–559 (QQQQQLPFHP…PSLEQDDGDE (69 aa)) are disordered. A compositionally biased stretch (low complexity) spans 513–552 (TSGPYSESSGTSSPSTSPRASNHSLCSGSSASKAGSSPSL). The region spanning 571–832 (FCPKDVLGHG…AKHVLKHPFF (262 aa)) is the Protein kinase domain. ATP is bound by residues 577 to 585 (LGHGAEGTI), Lys-599, and 643 to 645 (ELC). The active-site Proton acceptor is Asp-688. Residues 690 to 693 (KPHN) and Asp-711 each bind ATP. A phosphoserine mark is found at Ser-724 and Ser-729. Residues 835 to 963 (LEKQLQFFQD…ERLFQPYYFH (129 aa)) enclose the KEN domain. The interacts with hydroxy-aryl-aldehyde inhibitors stretch occupies residues 906–907 (NK). Thr-973 bears the Phosphothreonine mark.

It belongs to the protein kinase superfamily. Ser/Thr protein kinase family. In terms of assembly, monomer. Homodimer; disulfide-linked; homodimerization takes place in response to endoplasmic reticulum stress and promotes activation of the kinase and endoribonuclease activities. Dimer formation is driven by hydrophobic interactions within the N-terminal luminal domains and stabilized by disulfide bridges. Interacts (via the luminal region) with DNAJB9/ERdj4; interaction takes place in unstressed cells and promotes recruitment of HSPA5/BiP. Interacts (via the luminal region) with HSPA5/BiP; HSPA5/BiP is a negative regulator of the unfolded protein response (UPR) that prevents homodimerization of ERN1/IRE1 and subsequent activation of the protein. Interaction with HSPA5 also competitively inhibits ERN1 interaction with MANF. Interacts with PDIA6, a negative regulator of the UPR; the interaction is direct and disrupts homodimerization. Interacts with DAB2IP (via PH domain); the interaction occurs in a endoplasmic reticulum stress-induced dependent manner and is required for subsequent recruitment of TRAF2 to ERN1/IRE1. Interacts with TAOK3 and TRAF2. Interacts with RNF13. Interacts with LACC1. Interacts (when unphosphorylated) with DDRGK1; interaction is dependent on UFM1 and takes place in response to endoplasmic reticulum stress, regulating ERN1/IRE1-alpha stability. Interacts (via N-terminus) with P4HB/PDIA1; the interaction is enhanced by phosphorylation of P4HB by FAM20C in response to endoplasmic reticulum stress and results in attenuation of ERN1 activity. Interacts with TMBIM6; this interaction inhibits ERN1 activity. Interacts (via luminal domain) with MANF (via C-terminus); the interaction is decreased in the presence of increasing concentrations of Ca(2+). Requires Mg(2+) as cofactor. Post-translationally, autophosphorylated following homodimerization. Autophosphorylation promotes activation of the endoribonuclease domain. In response to ER stress, phosphorylated at Ser-724, Ser-729 and possibly Ser-726; phosphorylation promotes oligomerization and endoribonuclease activity. Dephosphorylated at Ser-724, Ser-729 and possibly Ser-726 by RPAP2 to abort failed ER-stress adaptation and trigger apoptosis. Phosphorylated at Ser-724; in response to the ER stressor tunicamycin. In terms of processing, ADP-ribosylated by PARP16 upon ER stress, which increases both kinase and endonuclease activities. In terms of tissue distribution, ubiquitously expressed. High levels observed in pancreatic tissue.

It localises to the endoplasmic reticulum membrane. The catalysed reaction is L-seryl-[protein] + ATP = O-phospho-L-seryl-[protein] + ADP + H(+). It catalyses the reaction L-threonyl-[protein] + ATP = O-phospho-L-threonyl-[protein] + ADP + H(+). Its activity is regulated as follows. The kinase domain is activated by trans-autophosphorylation following homodimerization. Kinase activity is required for activation of the endoribonuclease domain. Endoribonuclease activity is specifically inhibited by hydroxy-aryl-aldehydes (HAA). Functionally, serine/threonine-protein kinase and endoribonuclease that acts as a key sensor for the endoplasmic reticulum unfolded protein response (UPR). In unstressed cells, the endoplasmic reticulum luminal domain is maintained in its inactive monomeric state by binding to the endoplasmic reticulum chaperone HSPA5/BiP. Accumulation of misfolded proteins in the endoplasmic reticulum causes release of HSPA5/BiP, allowing the luminal domain to homodimerize, promoting autophosphorylation of the kinase domain and subsequent activation of the endoribonuclease activity. The endoribonuclease activity is specific for XBP1 mRNA and excises 26 nucleotides from XBP1 mRNA. The resulting spliced transcript of XBP1 encodes a transcriptional activator protein that up-regulates expression of UPR target genes. Acts as an upstream signal for ER stress-induced GORASP2-mediated unconventional (ER/Golgi-independent) trafficking of CFTR to cell membrane by modulating the expression and localization of SEC16A. This is Serine/threonine-protein kinase/endoribonuclease IRE1 from Homo sapiens (Human).